Here is an 856-residue protein sequence, read N- to C-terminus: MNVIDTDDLEKHTPMMRQYLTMKAEHHDMLLFYRMGDFYELFYDDAKRASELLGISLTARGKSGGDPIPMAGIPYHAVEGYLAKLVQIGQSVAICEQIGDPATAKGPVERKVVRIVTPGTLTDEALLQERQDNLLAAVYQGKVGFGYATLDVSSGRFVIAELDTKESLEAELQRTNPVEILYSEDFGELGLLSHFKGKRRRPEWEFDYDTSIKLLLAQFGTKDLHGFGISDARLSLQAAGCLMQYVKDTQRTTLPHINAIIRFNQADSIVLDAATRRNLELTQNLAGGRDNTLAAVLDNTATAMGSRMLQRWIHQPLRDPNQIIARQTAVNELLKTGTHEPLHEQLKALGDIERIMARLALRTARPRDFARLRQALSLLPELQQSLSVLNAPHTVKLCQYLGEFPEEQALLERAIVDNPPMLIRDGGVIREGYNNELDEWRGLSEGASDYLVQLEAREKERTGINTLKVGYNRVHGYYIEVSRLQSSQVPLNYQRRQTLKNMERYITPELKEYEEKVLSSQGKALALEKQLWEQLFDLILPKLHELQAFARAAAELDVLSNFAERAETLGYICPQLSQDIGVQIDAGRHPVVERVSQTPFIANPVTLHNQRRMLIVTGPNMGGKSTYMRQVALITLMAHIGCFVPAERAVIGPIDRIFTRIGASDDLASGRSTFMVEMTETANILHNATAQSLVLMDEIGRGTSTYDGLSLAWSAAEYLAQQIGAMTLFATHYFELTQLPDLMAGVYNVHLDAIEHEDTIAFMHAVQEGAASKSYGLQVAALAGVPAKVIKAAKHKLQQLESRDHQLEGTKTPIQTLLALPEPAENPALTKLQAINPDNLTPKQALDLLYELKRLS.

618 to 625 provides a ligand contact to ATP; that stretch reads GPNMGGKS.

The protein belongs to the DNA mismatch repair MutS family.

In terms of biological role, this protein is involved in the repair of mismatches in DNA. It is possible that it carries out the mismatch recognition step. This protein has a weak ATPase activity. The polypeptide is DNA mismatch repair protein MutS (Shewanella putrefaciens (strain CN-32 / ATCC BAA-453)).